A 315-amino-acid polypeptide reads, in one-letter code: Taste receptor type 2 member 3 (315 aa).

The Extracellular portion of the chain corresponds to 1-5 (MGLTE). Residues 6–26 (GLFLILSGTQFALGILVNCFI) form a helical membrane-spanning segment. The Cytoplasmic portion of the chain corresponds to 27-41 (GLVNGSSWFKTKRMS). Residues 42–62 (LSDFIITTLAFLRIILLCIIL) traverse the membrane as a helical segment. The Extracellular segment spans residues 63–93 (TDSFLIEFSPNAHDSGVIMQIIDVSWTFTNH). A helical membrane pass occupies residues 94–114 (LSIWLATCLGVLYCLKIASFS). Residues 115 to 127 (HPTFLWLKWRVSR) lie on the Cytoplasmic side of the membrane. Residues 128–148 (VMVWMLLGVLLLSCGSTASLI) form a helical membrane-spanning segment. At 149 to 185 (NEFKLYSVFRGIEATXNVTEHFRKKRSEYYLIHVLGT) the chain is on the extracellular side. Residue Asn165 is glycosylated (N-linked (GlcNAc...) asparagine). A helical transmembrane segment spans residues 186–206 (LWYLPPLIVSLAAYFLLIFSL). At 207–233 (GRHTRQMLQNGTSSRDPSTEAHKRAIR) the chain is on the cytoplasmic side. A helical membrane pass occupies residues 234 to 254 (IILSSFFLFLLYFLAFLIASF). Residues 255–265 (GNFLPKTKMAK) lie on the Extracellular side of the membrane. A helical membrane pass occupies residues 266-286 (MIGEVMTMFYPAGHSFILILG). The Cytoplasmic segment spans residues 287–315 (NSKLKQTFVEMLRCESGHLKPGSKGPIFS).

It belongs to the G-protein coupled receptor T2R family.

The protein localises to the membrane. In terms of biological role, gustducin-coupled receptor implicated in the perception of bitter compounds in the oral cavity and the gastrointestinal tract. Signals through PLCB2 and the calcium-regulated cation channel TRPM5. The protein is Taste receptor type 2 member 3 (TAS2R3) of Pongo pygmaeus (Bornean orangutan).